Consider the following 56-residue polypeptide: Large ribosomal subunit protein bL32 (56 aa).

A disordered region spans residues 1 to 38 (MAVQQNKKSRSKRGMRRSHDSLSTAQLSVDATSGELHR). Residues 7–16 (KKSRSKRGMR) are compositionally biased toward basic residues. The span at 21–31 (SLSTAQLSVDA) shows a compositional bias: polar residues.

The protein belongs to the bacterial ribosomal protein bL32 family.

This is Large ribosomal subunit protein bL32 from Shewanella woodyi (strain ATCC 51908 / MS32).